A 157-amino-acid polypeptide reads, in one-letter code: Rieske domain-containing protein (157 aa).

Position 1 is an N-acetylmethionine (Met1). Ser6 carries the phosphoserine modification. 2 consecutive Rieske domains span residues 16-94 (SSVC…TGEG) and 17-131 (SVCV…NIYV). Positions 57, 59, 80, and 83 each coordinate [2Fe-2S] cluster.

[2Fe-2S] cluster serves as cofactor.

The chain is Rieske domain-containing protein (RFESD) from Homo sapiens (Human).